A 165-amino-acid chain; its full sequence is Glycine cleavage system H protein, mitochondrial (165 aa).

A mitochondrion-targeting transit peptide spans 1–31; that stretch reads MALRIWASSTAKALRLSSASRPHFSPLFRCF. In terms of domain architecture, Lipoyl-binding spans 55 to 137; sequence VATIGITDHA…YEDGWMIKVK (83 aa). Lysine 96 carries the N6-lipoyllysine modification.

Belongs to the GcvH family. As to quaternary structure, the glycine cleavage system is composed of four components that only loosely associate: the P protein (EC 1.4.4.2), the T protein (EC 2.1.2.10), the L protein (EC 1.8.1.4) and the lipoyl-bearing H protein. (R)-lipoate serves as cofactor. As to expression, expressed in roots, stems and leaves.

Its subcellular location is the mitochondrion. Its function is as follows. The glycine cleavage system catalyzes the degradation of glycine. The H protein shuttles the methylamine group of glycine from the P protein to the T protein. The chain is Glycine cleavage system H protein, mitochondrial (GDCSH) from Flaveria trinervia (Clustered yellowtops).